A 35-amino-acid polypeptide reads, in one-letter code: U1-segestritoxin-Sf1a (35 aa).

Disulfide bonds link C10-C22 and C17-C28. A keys region for toxin activity region spans residues 31–33 (DPW).

This sequence belongs to the neurotoxin 16 (SFI) family. Expressed by the venom gland.

It is found in the secreted. Functionally, insecticidal toxin. This is U1-segestritoxin-Sf1a from Segestria florentina (Tube-web spider).